Consider the following 183-residue polypeptide: Outer membrane protein H.8 (183 aa).

The first 17 residues, 1 to 17, serve as a signal peptide directing secretion; the sequence is MKAYLALISAAVIGLAA. The N-palmitoyl cysteine moiety is linked to residue Cys18. Cys18 carries S-diacylglycerol cysteine lipidation. The disordered stretch occupies residues 27-51; it reads AEATPAAEAPASEAPAAEAAPADAA. A Plastocyanin-like domain is found at 57–183; that stretch reads GNCAATVESN…LMNGKVTLVD (127 aa). Residues His102, Cys166, His171, and Met175 each contribute to the Cu cation site.

The cofactor is Cu cation.

It is found in the cell outer membrane. The polypeptide is Outer membrane protein H.8 (Neisseria meningitidis serogroup C / serotype 2a (strain ATCC 700532 / DSM 15464 / FAM18)).